A 254-amino-acid polypeptide reads, in one-letter code: Ribonuclease 3 (254 aa).

The 131-residue stretch at 24–154 (LRRLQETLGV…VIGALFLDSG (131 aa)) folds into the RNase III domain. Glu67 lines the Mg(2+) pocket. Asp71 is an active-site residue. The Mg(2+) site is built by Asp140 and Glu143. Glu143 is an active-site residue. The DRBM domain maps to 181-250 (DYKSTLQVLA…ARLAWEQLSG (70 aa)).

The protein belongs to the ribonuclease III family. Homodimer. Mg(2+) serves as cofactor.

It is found in the cytoplasm. It catalyses the reaction Endonucleolytic cleavage to 5'-phosphomonoester.. Its function is as follows. Digests double-stranded RNA. Involved in the processing of primary rRNA transcript to yield the immediate precursors to the large and small rRNAs (23S and 16S). Processes some mRNAs, and tRNAs when they are encoded in the rRNA operon. Processes pre-crRNA and tracrRNA of type II CRISPR loci if present in the organism. This is Ribonuclease 3 from Treponema pallidum (strain Nichols).